A 322-amino-acid chain; its full sequence is ATP-dependent 6-phosphofructokinase (322 aa).

An ATP-binding site is contributed by G13. 23–27 (RAVVR) is a binding site for ADP. ATP contacts are provided by residues 74–75 (RC) and 104–107 (GDGS). D105 is a binding site for Mg(2+). 127–129 (TID) serves as a coordination point for substrate. D129 functions as the Proton acceptor in the catalytic mechanism. Residue R156 coordinates ADP. Residues R164 and 171-173 (MGR) contribute to the substrate site. ADP-binding positions include 187-189 (GAE) and 215-217 (KRH). Residues E224, R246, and 252–255 (HIQR) each bind substrate.

It belongs to the phosphofructokinase type A (PFKA) family. ATP-dependent PFK group I subfamily. Prokaryotic clade 'B1' sub-subfamily. Homotetramer. The cofactor is Mg(2+).

The protein localises to the cytoplasm. It carries out the reaction beta-D-fructose 6-phosphate + ATP = beta-D-fructose 1,6-bisphosphate + ADP + H(+). It participates in carbohydrate degradation; glycolysis; D-glyceraldehyde 3-phosphate and glycerone phosphate from D-glucose: step 3/4. Its activity is regulated as follows. Allosterically activated by ADP and other diphosphonucleosides, and allosterically inhibited by phosphoenolpyruvate. Its function is as follows. Catalyzes the phosphorylation of D-fructose 6-phosphate to fructose 1,6-bisphosphate by ATP, the first committing step of glycolysis. The polypeptide is ATP-dependent 6-phosphofructokinase (Paenibacillus macquariensis (Bacillus macquariensis)).